The chain runs to 762 residues: Acyl-homoserine lactone acylase PvdQ (762 aa).

The N-terminal stretch at 1–23 (MGMRTVLTGLAGMLLGSMMPVQA) is a signal peptide. The propeptide at 194 to 216 (ALSGEQAFQVAEQRRQRFRLERG) is spacer peptide. Ser217 functions as the Nucleophile in the catalytic mechanism.

The protein belongs to the peptidase S45 family. In terms of assembly, heterodimer of an alpha subunit and a beta subunit processed from the same precursor.

The protein resides in the periplasm. It catalyses the reaction an N-acyl-L-homoserine lactone + H2O = L-homoserine lactone + a carboxylate. In terms of biological role, catalyzes the deacylation of acyl-homoserine lactone (AHL or acyl-HSL), releasing homoserine lactone (HSL) and the corresponding fatty acid. Possesses a specificity for the degradation of long-chain acyl-HSLs (side chains of 11 to 14 carbons in length). Degrades 3-oxo-C12-HSL, one of the two main AHL signal molecules of P.aeruginosa, and thereby functions as a quorum quencher, inhibiting the las quorum-sensing system. Therefore, may enable P.aeruginosa to modulate its own quorum-sensing-dependent pathogenic potential. Also appears to be required for pyoverdin biosynthesis. This chain is Acyl-homoserine lactone acylase PvdQ (pvdQ), found in Pseudomonas aeruginosa (strain ATCC 15692 / DSM 22644 / CIP 104116 / JCM 14847 / LMG 12228 / 1C / PRS 101 / PAO1).